The primary structure comprises 98 residues: DVTVKLGADSGALVFEPSSVTIKAGETVTWVNNAGFPHNIVFDEDEVPSGANAEALSHEDYLNAPGESYSAKFDTAGTYGYFCEPHQGAGMKGTITVQ.

One can recognise a Plastocyanin-like domain in the interval 1–98 (DVTVKLGADS…AGMKGTITVQ (98 aa)). Cu cation is bound by residues histidine 38, cysteine 83, histidine 86, and methionine 91.

Belongs to the plastocyanin family. It depends on Cu(2+) as a cofactor.

The protein localises to the plastid. Its subcellular location is the chloroplast thylakoid membrane. Its function is as follows. Participates in electron transfer between P700 and the cytochrome b6-f complex in photosystem I. This is Plastocyanin (petE) from Scenedesmus fuscus (Green alga).